The sequence spans 315 residues: Putative 2-hydroxyacid dehydrogenase HI_1556 (315 aa).

NAD(+)-binding positions include Thr73, 156-157 (CL), 231-233 (TGR), and Asp257. The active site involves Arg233. Glu262 is an active-site residue. His285 functions as the Proton donor in the catalytic mechanism. 285–288 (HIAW) contributes to the NAD(+) binding site.

Belongs to the D-isomer specific 2-hydroxyacid dehydrogenase family.

The protein is Putative 2-hydroxyacid dehydrogenase HI_1556 of Haemophilus influenzae (strain ATCC 51907 / DSM 11121 / KW20 / Rd).